The following is a 377-amino-acid chain: Nitric oxide reductase FlRd-NAD(+) reductase (377 aa).

It belongs to the FAD-dependent oxidoreductase family. FAD is required as a cofactor.

The protein resides in the cytoplasm. It catalyses the reaction 2 reduced [nitric oxide reductase rubredoxin domain] + NAD(+) + H(+) = 2 oxidized [nitric oxide reductase rubredoxin domain] + NADH. It functions in the pathway nitrogen metabolism; nitric oxide reduction. Functionally, one of at least two accessory proteins for anaerobic nitric oxide (NO) reductase. Reduces the rubredoxin moiety of NO reductase. This is Nitric oxide reductase FlRd-NAD(+) reductase from Klebsiella pneumoniae (strain 342).